A 317-amino-acid polypeptide reads, in one-letter code: ATP synthase gamma chain (317 aa).

This sequence belongs to the ATPase gamma chain family. As to quaternary structure, F-type ATPases have 2 components, CF(1) - the catalytic core - and CF(0) - the membrane proton channel. CF(1) has five subunits: alpha(3), beta(3), gamma(1), delta(1), epsilon(1). CF(0) has three main subunits: a, b and c.

It is found in the cellular thylakoid membrane. Its function is as follows. Produces ATP from ADP in the presence of a proton gradient across the membrane. The gamma chain is believed to be important in regulating ATPase activity and the flow of protons through the CF(0) complex. In Synechococcus sp. (strain CC9311), this protein is ATP synthase gamma chain.